The following is a 465-amino-acid chain: ATP-dependent RNA helicase ddx19 (465 aa).

Over residues 1–20 (MSEKETNTTSTENKEKEKQE) the composition is skewed to basic and acidic residues. The disordered stretch occupies residues 1-45 (MSEKETNTTSTENKEKEKQEQTNTNSTTESTNNQVDEEYERPGRS). The segment covering 21–34 (QTNTNSTTESTNNQ) has biased composition (low complexity). The short motif at 70–98 (KTFEELGLKPELLKGVYAMGYNKPSKIQE) is the Q motif element. Residues 102–268 (PIIIQSPNNL…KKIVQDPYTS (167 aa)) enclose the Helicase ATP-binding domain. An ATP-binding site is contributed by 115–122 (SQSGTGKT). Residues 215–218 (DEAD) carry the DEAD box motif. The Helicase C-terminal domain occupies 297–449 (ILSDIYGFIS…ELKSSEIESL (153 aa)).

This sequence belongs to the DEAD box helicase family. DDX19/DBP5 subfamily.

The catalysed reaction is ATP + H2O = ADP + phosphate + H(+). ATP-binding RNA helicase required for normal differentiation and development. In Dictyostelium discoideum (Social amoeba), this protein is ATP-dependent RNA helicase ddx19 (helC).